The primary structure comprises 157 residues: Deoxyuridine 5'-triphosphate nucleotidohydrolase (157 aa).

Substrate-binding positions include 73–75 (RSG), Asn-86, and 90–92 (TID).

This sequence belongs to the dUTPase family. Mg(2+) is required as a cofactor.

The enzyme catalyses dUTP + H2O = dUMP + diphosphate + H(+). Its pathway is pyrimidine metabolism; dUMP biosynthesis; dUMP from dCTP (dUTP route): step 2/2. This enzyme is involved in nucleotide metabolism: it produces dUMP, the immediate precursor of thymidine nucleotides and it decreases the intracellular concentration of dUTP so that uracil cannot be incorporated into DNA. The protein is Deoxyuridine 5'-triphosphate nucleotidohydrolase of Azorhizobium caulinodans (strain ATCC 43989 / DSM 5975 / JCM 20966 / LMG 6465 / NBRC 14845 / NCIMB 13405 / ORS 571).